The sequence spans 30 residues: Trypsin inhibitor 1 (30 aa).

3 cysteine pairs are disulfide-bonded: Cys-4/Cys-21, Cys-11/Cys-23, and Cys-17/Cys-29.

The protein belongs to the protease inhibitor I7 (squash-type serine protease inhibitor) family.

Its subcellular location is the secreted. Inhibits trypsin. The chain is Trypsin inhibitor 1 from Citrullus lanatus (Watermelon).